Reading from the N-terminus, the 445-residue chain is UDP-N-acetylmuramate--L-alanine ligase (445 aa).

Residue Gly-113–Ser-119 coordinates ATP.

It belongs to the MurCDEF family.

Its subcellular location is the cytoplasm. It catalyses the reaction UDP-N-acetyl-alpha-D-muramate + L-alanine + ATP = UDP-N-acetyl-alpha-D-muramoyl-L-alanine + ADP + phosphate + H(+). It participates in cell wall biogenesis; peptidoglycan biosynthesis. Cell wall formation. The protein is UDP-N-acetylmuramate--L-alanine ligase of Enterococcus faecalis (strain ATCC 700802 / V583).